Reading from the N-terminus, the 547-residue chain is Probable pectinesterase/pectinesterase inhibitor 12 (547 aa).

An N-terminal signal peptide occupies residues 1–23 (MALSSFNLSSLLFLLFFTPSVFS). Residues 31–185 (NPHETSATSF…YKHISNSLSA (155 aa)) form a pectinesterase inhibitor 12 region. Asn-131, Asn-247, Asn-260, and Asn-303 each carry an N-linked (GlcNAc...) asparagine glycan. Positions 237-533 (SLVVAADGTG…FTATEFITGD (297 aa)) are pectinesterase 12. Substrate-binding residues include Thr-312 and Gln-342. Catalysis depends on Asp-365, which acts as the Proton donor; for pectinesterase activity. Residues Cys-379 and Cys-399 are joined by a disulfide bond. The Nucleophile; for pectinesterase activity role is filled by Asp-386. N-linked (GlcNAc...) asparagine glycans are attached at residues Asn-432 and Asn-443. Arg-454 and Trp-456 together coordinate substrate. Asn-523 carries an N-linked (GlcNAc...) asparagine glycan.

The protein in the N-terminal section; belongs to the PMEI family. In the C-terminal section; belongs to the pectinesterase family. In terms of tissue distribution, expressed in siliques.

It localises to the secreted. The protein resides in the cell wall. It catalyses the reaction [(1-&gt;4)-alpha-D-galacturonosyl methyl ester](n) + n H2O = [(1-&gt;4)-alpha-D-galacturonosyl](n) + n methanol + n H(+). It functions in the pathway glycan metabolism; pectin degradation; 2-dehydro-3-deoxy-D-gluconate from pectin: step 1/5. In terms of biological role, acts in the modification of cell walls via demethylesterification of cell wall pectin. The chain is Probable pectinesterase/pectinesterase inhibitor 12 (PME12) from Arabidopsis thaliana (Mouse-ear cress).